We begin with the raw amino-acid sequence, 131 residues long: Transcriptional activatory protein CaiF (131 aa).

In terms of biological role, potential transcriptional activator of carnitine metabolism. In Escherichia coli (strain K12), this protein is Transcriptional activatory protein CaiF (caiF).